Consider the following 100-residue polypeptide: uncharacterized protein (100 aa).

The protein resides in the mitochondrion. This is an uncharacterized protein from Arabidopsis thaliana (Mouse-ear cress).